A 1818-amino-acid polypeptide reads, in one-letter code: Cytadherence high molecular weight protein 2 (1818 aa).

Coiled coils occupy residues 31–880, 919–1607, 1644–1755, and 1786–1817; these read LESA…KQRE, ELKI…DNKH, HLFE…QAVQ, and LATQ…QKAA.

Phosphorylated mainly on serine residues.

Functionally, component of the cytoskeleton-like structure which stabilizes the shape of the wall-less Mycoplasma. This cytoskeleton-like network of accessory proteins containing HMW proteins 1 to 5 allows the proper anchoring of cytadhesin proteins in the mycoplasmal membrane at the attachment organelle. The sequence is that of Cytadherence high molecular weight protein 2 (hmw2) from Mycoplasma pneumoniae (strain ATCC 29342 / M129 / Subtype 1) (Mycoplasmoides pneumoniae).